The chain runs to 261 residues: Hydroxyethylthiazole kinase (261 aa).

Met-39 serves as a coordination point for substrate. ATP-binding residues include Arg-115 and Thr-159. Substrate is bound at residue Gly-186.

Belongs to the Thz kinase family. It depends on Mg(2+) as a cofactor.

The catalysed reaction is 5-(2-hydroxyethyl)-4-methylthiazole + ATP = 4-methyl-5-(2-phosphooxyethyl)-thiazole + ADP + H(+). The protein operates within cofactor biosynthesis; thiamine diphosphate biosynthesis; 4-methyl-5-(2-phosphoethyl)-thiazole from 5-(2-hydroxyethyl)-4-methylthiazole: step 1/1. Catalyzes the phosphorylation of the hydroxyl group of 4-methyl-5-beta-hydroxyethylthiazole (THZ). The chain is Hydroxyethylthiazole kinase from Macrococcus caseolyticus (strain JCSC5402) (Macrococcoides caseolyticum).